Reading from the N-terminus, the 48-residue chain is Large ribosomal subunit protein bL32 (48 aa).

Basic residues predominate over residues 1-20 (MAVPKRRVSKTRAAKRRTHY). Residues 1–48 (MAVPKRRVSKTRAAKRRTHYKVSLPMPVKDKDGSYKMPHRANPTTKEY) are disordered.

The protein belongs to the bacterial ribosomal protein bL32 family.

This chain is Large ribosomal subunit protein bL32, found in Campylobacter jejuni subsp. doylei (strain ATCC BAA-1458 / RM4099 / 269.97).